We begin with the raw amino-acid sequence, 544 residues long: Lysophosphatidylcholine acyltransferase 2 (544 aa).

Residues 1–57 (MSRCAQAAEVAATVPGAGVGNVGLRPPMVPRQASFFPPPVPNPFVQQTQIGSARRVQ) lie on the Cytoplasmic side of the membrane. The helical; Signal-anchor for type II membrane protein transmembrane segment at 58–78 (IVLLGIILLPIRVLLVALILL) threads the bilayer. At 79-544 (LAWPFAAIST…EESTSDKKDD (466 aa)) the chain is on the lumenal side. Positions 146 to 151 (HSTFFD) match the HXXXXD motif motif. An EGTC motif motif is present at residues 220 to 223 (EGTC). 2 consecutive EF-hand domains span residues 391–426 (PVSD…LCNP) and 428–463 (NTEE…SLGV). Ca(2+)-binding residues include Asp-404, Asn-406, Asp-408, Ser-410, Glu-415, Asp-441, Asp-443, Asp-445, Tyr-447, and Glu-452. Residues 518-529 (VQTTPSTASNKV) are compositionally biased toward polar residues. The disordered stretch occupies residues 518–544 (VQTTPSTASNKVSPEKHEESTSDKKDD). The segment covering 530–544 (SPEKHEESTSDKKDD) has biased composition (basic and acidic residues).

This sequence belongs to the 1-acyl-sn-glycerol-3-phosphate acyltransferase family.

Its subcellular location is the endoplasmic reticulum membrane. The protein resides in the golgi apparatus membrane. The protein localises to the cell membrane. It is found in the lipid droplet. It catalyses the reaction a 1-acyl-sn-glycero-3-phosphocholine + an acyl-CoA = a 1,2-diacyl-sn-glycero-3-phosphocholine + CoA. The enzyme catalyses a 1-O-alkyl-sn-glycero-3-phosphocholine + acetyl-CoA = a 1-O-alkyl-2-acetyl-sn-glycero-3-phosphocholine + CoA. The catalysed reaction is a 1-acyl-sn-glycero-3-phosphate + an acyl-CoA = a 1,2-diacyl-sn-glycero-3-phosphate + CoA. It carries out the reaction a 1-O-(1Z-alkenyl)-sn-glycero-3-phosphocholine + an acyl-CoA = a 1-O-(1Z-alkenyl)-2-acyl-sn-glycero-3-phosphocholine + CoA. It catalyses the reaction 1-hexadecanoyl-sn-glycero-3-phosphate + (9Z)-octadecenoyl-CoA = 1-hexadecanoyl-2-(9Z-octadecenoyl)-sn-glycero-3-phosphate + CoA. The enzyme catalyses 1-(9Z-octadecenoyl)-sn-glycero-3-phosphate + (9Z)-octadecenoyl-CoA = 1,2-di-(9Z-octadecenoyl)-sn-glycero-3-phosphate + CoA. The catalysed reaction is 1-(9Z-octadecenoyl)-sn-glycero-3-phosphate + hexadecanoyl-CoA = 1-(9Z)-octadecenoyl-2-hexadecanoyl-sn-glycero-3-phosphate + CoA. It carries out the reaction 1-heptadecanoyl-sn-glycero-3-phosphate + (9Z)-octadecenoyl-CoA = 1-heptadecanoyl-2-(9Z)-octadecenoyl-sn-glycero-3-phosphate + CoA. It catalyses the reaction 1-octadecanoyl-sn-glycero-3-phosphate + (9Z)-octadecenoyl-CoA = 1-octadecanoyl-2-(9Z-octadecenoyl)-sn-glycero-3-phosphate + CoA. The enzyme catalyses heptadecanoyl-CoA + 1-(9Z-octadecenoyl)-sn-glycero-3-phosphate = 1-(9Z)-octadecenoyl-2-heptadecanoyl-sn-glycero-3-phosphate + CoA. The catalysed reaction is 1-(9Z-octadecenoyl)-sn-glycero-3-phosphate + (9Z,12Z)-octadecadienoyl-CoA = 1-(9Z)-octadecenoyl-2-(9Z,12Z)-octadecadienoyl-sn-glycero-3-phosphate + CoA. It carries out the reaction 1-(9Z-octadecenoyl)-sn-glycero-3-phosphate + tetradecanoyl-CoA = 1-(9Z)-octadecenoyl-2-tetradecanoyl-sn-glycero-3-phosphate + CoA. It catalyses the reaction pentadecanoyl-CoA + 1-(9Z-octadecenoyl)-sn-glycero-3-phosphate = 1-(9Z)-octadecenoyl-2-pentadecanoyl-sn-glycero-3-phosphate + CoA. The enzyme catalyses nonadecanoyl-CoA + 1-(9Z-octadecenoyl)-sn-glycero-3-phosphate = 1-(9Z)-octadecenoyl-2-nonadecanoyl-sn-glycero-3-phosphate + CoA. The catalysed reaction is 1-hexadecanoyl-sn-glycero-3-phosphocholine + (9Z)-octadecenoyl-CoA = 1-hexadecanoyl-2-(9Z-octadecenoyl)-sn-glycero-3-phosphocholine + CoA. It carries out the reaction 1-O-hexadecyl-sn-glycero-3-phosphocholine + acetyl-CoA = 1-O-hexadecyl-2-acetyl-sn-glycero-3-phosphocholine + CoA. It catalyses the reaction 1-O-octadecyl-sn-glycero-3-phosphocholine + acetyl-CoA = 1-O-octadecyl-2-acetyl-sn-glycero-3-phosphocholine + CoA. The enzyme catalyses 1-hexadecanoyl-sn-glycero-3-phosphocholine + acetyl-CoA = 1-hexadecanoyl-2-acetyl-sn-glycero-3-phosphocholine + CoA. The catalysed reaction is 1-octadecanoyl-sn-glycero-3-phosphocholine + acetyl-CoA = 1-octadecanoyl-2-acetyl-sn-glycero-3-phosphocholine + CoA. It carries out the reaction a 1-O-(1Z-alkenyl)-sn-glycero-3-phosphocholine + acetyl-CoA = 1-O-(1Z)-alkenyl-2-acetyl-sn-glycero-3-phosphocholine + CoA. It catalyses the reaction 1-O-octadecyl-sn-glycero-3-phosphocholine + (5Z,8Z,11Z,14Z)-eicosatetraenoyl-CoA = 1-O-octadecyl-2-(5Z,8Z,11Z,14Z)-eicosatetraenoyl-sn-glycero-3-phosphocholine + CoA. Its pathway is lipid metabolism; phospholipid metabolism. Exhibits both acyltransferase and acetyltransferase activities. Catalyzes the conversion of lysophosphatidylcholine (1-acyl-sn-glycero-3-phosphocholine or LPC) into phosphatidylcholine (1,2-diacyl-sn-glycero-3-phosphocholine or PC). Catalyzes the conversion 1-acyl-sn-glycerol-3-phosphate (lysophosphatidic acid or LPA) into 1,2-diacyl-sn-glycerol-3-phosphate (phosphatidic acid or PA) by incorporating an acyl moiety at the sn-2 position of the glycerol backbone. Involved in platelet-activating factor (PAF) biosynthesis by catalyzing the conversion of the PAF precursor, 1-O-alkyl-sn-glycero-3-phosphocholine (lyso-PAF) into 1-O-alkyl-2-acetyl-sn-glycero-3-phosphocholine (PAF). Also converts lyso-PAF to 1-O-alkyl-2-acyl-sn-glycero-3-phosphocholine (PC), a major component of cell membranes and a PAF precursor. Under resting conditions, acyltransferase activity is preferred. Upon acute inflammatory stimulus, acetyltransferase activity is enhanced and PAF synthesis increases. Involved in the regulation of lipid droplet number and size. This chain is Lysophosphatidylcholine acyltransferase 2 (LPCAT2), found in Homo sapiens (Human).